Reading from the N-terminus, the 80-residue chain is RNA-binding protein Hfq (80 aa).

One can recognise a Sm domain in the interval 10–70; the sequence is DLFLNTVRKQ…ISTIMPGQPM (61 aa).

The protein belongs to the Hfq family. As to quaternary structure, homohexamer.

Functionally, RNA chaperone that binds small regulatory RNA (sRNAs) and mRNAs to facilitate mRNA translational regulation in response to envelope stress, environmental stress and changes in metabolite concentrations. Also binds with high specificity to tRNAs. The sequence is that of RNA-binding protein Hfq from Rhizobium etli (strain CIAT 652).